Reading from the N-terminus, the 279-residue chain is Digeranylgeranylglyceryl phosphate synthase (279 aa).

Transmembrane regions (helical) follow at residues 5-25 (GFFA…AIVA), 27-47 (LIAT…VLLV), 90-110 (FLLG…IALV), 127-147 (FFGN…GGAY), 148-168 (AGWH…LAML), 198-218 (KTAL…AVPY), 219-239 (LWWG…ILFA), and 259-279 (TLLK…AVFL).

It belongs to the UbiA prenyltransferase family. DGGGP synthase subfamily. It depends on Mg(2+) as a cofactor.

Its subcellular location is the cell membrane. It carries out the reaction sn-3-O-(geranylgeranyl)glycerol 1-phosphate + (2E,6E,10E)-geranylgeranyl diphosphate = 2,3-bis-O-(geranylgeranyl)-sn-glycerol 1-phosphate + diphosphate. The protein operates within membrane lipid metabolism; glycerophospholipid metabolism. Prenyltransferase that catalyzes the transfer of the geranylgeranyl moiety of geranylgeranyl diphosphate (GGPP) to the C2 hydroxyl of (S)-3-O-geranylgeranylglyceryl phosphate (GGGP). This reaction is the second ether-bond-formation step in the biosynthesis of archaeal membrane lipids. The polypeptide is Digeranylgeranylglyceryl phosphate synthase (Methanoregula boonei (strain DSM 21154 / JCM 14090 / 6A8)).